Here is a 522-residue protein sequence, read N- to C-terminus: Major facilitator-type transporter sorT (522 aa).

The tract at residues 1-21 (MSHTEPKAPVNTGEVENGHLY) is disordered. The next 12 membrane-spanning stretches (helical) occupy residues 52–72 (WFIA…SSAY), 89–109 (VFIV…AVWA), 121–141 (QILW…SAGS), 143–163 (NVAT…SPLV), 183–203 (TIYC…GGFV), 211–231 (WVQG…IVFI), 280–300 (WIFL…AIIY), 324–344 (IGGL…VYAI), 366–386 (LPPA…FAWT), 395–415 (VSII…LPIM), 427–447 (ASVL…FPLF), and 457–477 (IHWA…FPLI).

This sequence belongs to the major facilitator superfamily. Sugar transporter (TC 2.A.1.1) family.

It localises to the membrane. Major facilitator-type transporter; part of the gene cluster that mediates the biosynthesis of sorbicillinoids, a diverse group of yellow secondary metabolites that restrict growth of competing pathogenic fungi but not of bacteria. The polypeptide is Major facilitator-type transporter sorT (Penicillium rubens (strain ATCC 28089 / DSM 1075 / NRRL 1951 / Wisconsin 54-1255) (Penicillium chrysogenum)).